The sequence spans 370 residues: MLRGNNIKKVNSLLVRSFHSTVGNRSGGPSTPINYPSLEIENAGEKQKMNLFQAINNGMDIAMQKDSKAVVFGEDVGFGGVFRCTVGLRDKYGASRVFNTPLCEQGIAGFAIGLAAQGATPIAEIQFADYIFPAFDQIVNEAAKYRYRSGGQFDCGSLTIRSPYGAVGHGGHYHSQSPESYFGHTPGLKVVIPSTPIEAKGLLLASIREKDPVIFFEPKLMYRSAVEEVPIGDYEIPLGKARIVKEGKDITIIGWGAQMRVLLQAVNMAEEKLGISCELIDLRTIQPWDVETVVESVKKTGRVVISHEAPKTGGWAAEISATIQERCFLHLEAPIQRVCGYDTPFPLIFEKFYVPDHLKNFESIKKTMVY.

The N-terminal 25 residues, 1–25 (MLRGNNIKKVNSLLVRSFHSTVGNR), are a transit peptide targeting the mitochondrion. Tyrosine 130 serves as a coordination point for thiamine diphosphate. K(+)-binding residues include glycine 156, leucine 158, threonine 159, and glutamate 209.

As to quaternary structure, heterotetramer of 2 alpha and 2 beta chains. Thiamine diphosphate is required as a cofactor.

It localises to the mitochondrion matrix. It catalyses the reaction N(6)-[(R)-lipoyl]-L-lysyl-[protein] + 3-methyl-2-oxobutanoate + H(+) = N(6)-[(R)-S(8)-2-methylpropanoyldihydrolipoyl]-L-lysyl-[protein] + CO2. The branched-chain alpha-keto dehydrogenase complex catalyzes the overall conversion of alpha-keto acids to acyl-CoA and CO(2). It contains multiple copies of three enzymatic components: branched-chain alpha-keto acid decarboxylase (E1), lipoamide acyltransferase (E2) and lipoamide dehydrogenase (E3). The polypeptide is 2-oxoisovalerate dehydrogenase subunit beta, mitochondrial (bkdB) (Dictyostelium discoideum (Social amoeba)).